The primary structure comprises 380 residues: Cytochrome b (380 aa).

Transmembrane regions (helical) follow at residues 34 to 54 (FGSLLGICLLTQILTGLLLAT), 78 to 99 (WLIRNLHANGASFFFICIYLHI), 114 to 134 (WNTGIILLLTLMATAFVGYVL), and 179 to 199 (FFALHFLLPFMIAGLALIHLT). Heme b is bound by residues H84 and H98. Positions 183 and 197 each coordinate heme b. Residue H202 participates in a ubiquinone binding. 4 helical membrane-spanning segments follow: residues 227 to 247 (LKDILGFIIMFLPLTTLALFS), 289 to 309 (LGGVLALAASVLVLFLVPLLH), 321 to 341 (LSQFLFWTLVANLLILTWVGS), and 348 to 368 (FIIIGQLASLTYFTILLLLFP).

The protein belongs to the cytochrome b family. In terms of assembly, the cytochrome bc1 complex contains 11 subunits: 3 respiratory subunits (MT-CYB, CYC1 and UQCRFS1), 2 core proteins (UQCRC1 and UQCRC2) and 6 low-molecular weight proteins (UQCRH/QCR6, UQCRB/QCR7, UQCRQ/QCR8, UQCR10/QCR9, UQCR11/QCR10 and a cleavage product of UQCRFS1). This cytochrome bc1 complex then forms a dimer. Requires heme b as cofactor.

The protein localises to the mitochondrion inner membrane. Its function is as follows. Component of the ubiquinol-cytochrome c reductase complex (complex III or cytochrome b-c1 complex) that is part of the mitochondrial respiratory chain. The b-c1 complex mediates electron transfer from ubiquinol to cytochrome c. Contributes to the generation of a proton gradient across the mitochondrial membrane that is then used for ATP synthesis. This is Cytochrome b (MT-CYB) from Pinguinus impennis (Great auk).